The sequence spans 529 residues: Putative amidohydrolase YtcJ (529 aa).

The protein belongs to the metallo-dependent hydrolases superfamily.

The protein is Putative amidohydrolase YtcJ (ytcJ) of Bacillus subtilis (strain 168).